The following is a 306-amino-acid chain: Ribonuclease Z (306 aa).

The Zn(2+) site is built by histidine 61, histidine 63, aspartate 65, histidine 66, histidine 137, aspartate 207, and histidine 263. Aspartate 65 (proton acceptor) is an active-site residue.

Belongs to the RNase Z family. In terms of assembly, homodimer. Requires Zn(2+) as cofactor.

The enzyme catalyses Endonucleolytic cleavage of RNA, removing extra 3' nucleotides from tRNA precursor, generating 3' termini of tRNAs. A 3'-hydroxy group is left at the tRNA terminus and a 5'-phosphoryl group is left at the trailer molecule.. In terms of biological role, zinc phosphodiesterase, which displays some tRNA 3'-processing endonuclease activity. Probably involved in tRNA maturation, by removing a 3'-trailer from precursor tRNA. This chain is Ribonuclease Z, found in Thermococcus sibiricus (strain DSM 12597 / MM 739).